The primary structure comprises 140 residues: MIVLDTNVISELWKAEPDRAVLAWIDAQMIETLYLSAITVAELRFGLAAMPAGKRRTIFQNRLEGEVLPALAGRVLPFDLDASRSYADLMAQAKTSGKVIGKADGYIAATAVAHGFMVATRDTSPFEAAGLDIINPWEPA.

In terms of domain architecture, PINc spans 2 to 135 (IVLDTNVISE…FEAAGLDIIN (134 aa)). Aspartate 5 and aspartate 104 together coordinate Mg(2+).

This sequence belongs to the PINc/VapC protein family. Requires Mg(2+) as cofactor.

Its function is as follows. Toxic component of a type II toxin-antitoxin (TA) system. An RNase. Involved in plasmid stability. This is VapC ribonuclease Y4jK from Sinorhizobium fredii (strain NBRC 101917 / NGR234).